Consider the following 41-residue polypeptide: Large ribosomal subunit protein bL36 (41 aa).

This sequence belongs to the bacterial ribosomal protein bL36 family.

The protein is Large ribosomal subunit protein bL36 of Stenotrophomonas maltophilia (strain R551-3).